The chain runs to 97 residues: C-C motif chemokine 8 (97 aa).

The first 23 residues, 1-23, serve as a signal peptide directing secretion; it reads MKIYAVLLCLLLIAVPVSPEKLT. Intrachain disulfides connect Cys32–Cys57 and Cys33–Cys73.

The protein belongs to the intercrine beta (chemokine CC) family. As to quaternary structure, monomer or homodimer; in equilibrium.

Its subcellular location is the secreted. Its function is as follows. Chemotactic factor that attracts monocytes. This protein can bind heparin. This chain is C-C motif chemokine 8 (Ccl8), found in Mus musculus (Mouse).